A 31-amino-acid chain; its full sequence is Cytochrome b6-f complex subunit 6 (31 aa).

A helical transmembrane segment spans residues 3–23 (TITSYFGFLLAVLTITSGLFI).

The protein belongs to the PetL family. In terms of assembly, the 4 large subunits of the cytochrome b6-f complex are cytochrome b6, subunit IV (17 kDa polypeptide, PetD), cytochrome f and the Rieske protein, while the 4 small subunits are PetG, PetL, PetM and PetN. The complex functions as a dimer.

The protein localises to the plastid. It is found in the chloroplast thylakoid membrane. Component of the cytochrome b6-f complex, which mediates electron transfer between photosystem II (PSII) and photosystem I (PSI), cyclic electron flow around PSI, and state transitions. PetL is important for photoautotrophic growth as well as for electron transfer efficiency and stability of the cytochrome b6-f complex. The protein is Cytochrome b6-f complex subunit 6 of Lotus japonicus (Lotus corniculatus var. japonicus).